The chain runs to 478 residues: Lysine histidine transporter-like 7 (478 aa).

Topologically, residues 1 to 63 (MSIALGNLFD…ITESRKGNVY (63 aa)) are cytoplasmic. Positions 15–45 (ESGGSPLFMSPAPSTDPQPISGEKNGGDGGR) are disordered. The helical transmembrane segment at 64 to 86 (TATFHLLCSGIGLQVILLPAAFA) threads the bilayer. Topologically, residues 87–89 (ALG) are extracellular. Residues 90 to 112 (WVWGTIILTVGFVWKLYTTWLLV) traverse the membrane as a helical segment. Topologically, residues 113–140 (QLHEAVPGIRISRYVRLAIASFGVKLGK) are cytoplasmic. The chain crosses the membrane as a helical span at residues 141–161 (LLGIFPVMYLSGGACTILVIT). The Extracellular portion of the chain corresponds to 162–177 (GGKSIQQLLQIMSDDN). A helical membrane pass occupies residues 178-198 (TAPLTSVQCFLVFSCIAMIMS). Topologically, residues 199–205 (QFPNLNS) are cytoplasmic. A helical transmembrane segment spans residues 206–226 (LFGVSLIGAFMGIAYCTVIWI). Residues 227–241 (LPVASDSQRTQVSVS) lie on the Extracellular side of the membrane. Residues 242-262 (YATMDKSFVHIFNAIGLIALV) traverse the membrane as a helical segment. The Cytoplasmic portion of the chain corresponds to 263 to 291 (YRGNNLVLEIQGTLPSDSKNPSCKTMWRA). The helical transmembrane segment at 292–312 (VMISHALVAICMFPLTFAVYW) threads the bilayer. At 313 to 340 (AYGDKIPATGGPVGNYLKLYTQEHSKRA) the chain is on the extracellular side. A helical membrane pass occupies residues 341-361 (ACFIHLTFIFSCLCSYPINLM). The Cytoplasmic portion of the chain corresponds to 362–379 (PACDNIEMVYITKKKKPA). A helical membrane pass occupies residues 380-402 (SIIVRMMLRVFLSLVCFTIAVGF). Residues 403-406 (PFLP) lie on the Extracellular side of the membrane. A helical membrane pass occupies residues 407–429 (YLAVLIGAIALLVTFTYPCFMWI). Over 430-439 (SIKKPQRKSP) the chain is Cytoplasmic. The helical transmembrane segment at 440–460 (MWLFNVLVGCLGASLSVLLLV) threads the bilayer. Residues 461 to 478 (ASAMRLAQKGLHANFFRP) lie on the Extracellular side of the membrane.

This sequence belongs to the amino acid/polyamine transporter 2 family. Amino acid/auxin permease (AAAP) (TC 2.A.18.2) subfamily.

The protein resides in the cell membrane. Functionally, amino acid transporter. This is Lysine histidine transporter-like 7 from Arabidopsis thaliana (Mouse-ear cress).